The chain runs to 61 residues: Small ribosomal subunit protein uS14 (61 aa).

Residues C24, C27, C40, and C43 each coordinate Zn(2+).

Belongs to the universal ribosomal protein uS14 family. Zinc-binding uS14 subfamily. Part of the 30S ribosomal subunit. Contacts proteins S3 and S10. Zn(2+) serves as cofactor.

Functionally, binds 16S rRNA, required for the assembly of 30S particles and may also be responsible for determining the conformation of the 16S rRNA at the A site. This Desulforamulus reducens (strain ATCC BAA-1160 / DSM 100696 / MI-1) (Desulfotomaculum reducens) protein is Small ribosomal subunit protein uS14.